The following is a 290-amino-acid chain: S-adenosylmethionine-dependent nucleotide dehydratase (290 aa).

A Radical SAM core domain is found at 6–226; sequence SGNNIIPSVN…VNRHSKNKFL (221 aa). Residues C22, C26, and C29 each contribute to the [4Fe-4S] cluster site.

The protein belongs to the radical SAM superfamily. Viperin family. [4Fe-4S] cluster is required as a cofactor.

The catalysed reaction is UTP + AH2 + S-adenosyl-L-methionine = 3'-deoxy-3',4'-didehydro-UTP + 5'-deoxyadenosine + L-methionine + A + H2O + H(+). Its function is as follows. Expression of pVip47 in E.coli (strain MG1655) confers resistance to phage P1; has no effect against T7. Catalyzes the conversion of uridine triphosphate (UTP) to 3'-deoxy-3',4'-didehydro-UTP (ddhUTP), probably via a SAM-dependent radical mechanism. The modified nucleotide represses transcription from T7 RNA polymerase-directed genes (possibly by acting as chain terminators), strongly suggesting these nucleotides block viral polymerase transcription. How this protein allows bacteria to resist viruses that do not encode their own RNA polymerase (such as lambda, P1) is unknown. This is S-adenosylmethionine-dependent nucleotide dehydratase from Flammeovirga pacifica.